Consider the following 207-residue polypeptide: Large ribosomal subunit protein uL3 (207 aa).

It belongs to the universal ribosomal protein uL3 family. As to quaternary structure, part of the 50S ribosomal subunit. Forms a cluster with proteins L14 and L19.

In terms of biological role, one of the primary rRNA binding proteins, it binds directly near the 3'-end of the 23S rRNA, where it nucleates assembly of the 50S subunit. This chain is Large ribosomal subunit protein uL3, found in Thermotoga maritima (strain ATCC 43589 / DSM 3109 / JCM 10099 / NBRC 100826 / MSB8).